Consider the following 552-residue polypeptide: uncharacterized protein (552 aa).

29-36 (GENAWGKS) contributes to the ATP binding site. Positions 379-469 (RCWLLVEGET…AEREHLTALP (91 aa)) constitute a Toprim domain.

This is an uncharacterized protein from Escherichia coli (strain K12).